The primary structure comprises 105 residues: Protein U4 (105 aa).

Residues 5-25 traverse the membrane as a helical segment; it reads FLLFLLLLVLVINPSLVVNMV.

Belongs to the nanovirus U4 protein family.

It localises to the membrane. In Faba bean necrotic yellows virus (isolate Egyptian EV1-93) (FBNYV), this protein is Protein U4 (DNA-U4).